A 274-amino-acid polypeptide reads, in one-letter code: 2-dehydro-3-deoxyphosphooctonate aldolase (274 aa).

This sequence belongs to the KdsA family.

The protein resides in the cytoplasm. The catalysed reaction is D-arabinose 5-phosphate + phosphoenolpyruvate + H2O = 3-deoxy-alpha-D-manno-2-octulosonate-8-phosphate + phosphate. It functions in the pathway carbohydrate biosynthesis; 3-deoxy-D-manno-octulosonate biosynthesis; 3-deoxy-D-manno-octulosonate from D-ribulose 5-phosphate: step 2/3. The protein operates within bacterial outer membrane biogenesis; lipopolysaccharide biosynthesis. In Rickettsia typhi (strain ATCC VR-144 / Wilmington), this protein is 2-dehydro-3-deoxyphosphooctonate aldolase.